A 129-amino-acid polypeptide reads, in one-letter code: Follitropin subunit beta (129 aa).

The signal sequence occupies residues 1 to 20 (MKTLQFFFLFCCWKAICCNS). 6 cysteine pairs are disulfide-bonded: cysteine 21–cysteine 69, cysteine 35–cysteine 84, cysteine 38–cysteine 122, cysteine 46–cysteine 100, cysteine 50–cysteine 102, and cysteine 105–cysteine 112. Residues asparagine 25 and asparagine 42 are each glycosylated (N-linked (GlcNAc...) asparagine).

This sequence belongs to the glycoprotein hormones subunit beta family. Heterodimer. The active follitropin is a heterodimer composed of an alpha chain/CGA shared with other hormones and a unique beta chain/FSHB shown here.

The protein resides in the secreted. Functionally, together with the alpha chain CGA constitutes follitropin, the follicle-stimulating hormone, and provides its biological specificity to the hormone heterodimer. Binds FSHR, a G protein-coupled receptor, on target cells to activate downstream signaling pathways. Follitropin is involved in follicle development and spermatogenesis in reproductive organs. This is Follitropin subunit beta (FSHB) from Pan troglodytes (Chimpanzee).